Reading from the N-terminus, the 649-residue chain is Thioredoxin reductase 1, cytoplasmic (649 aa).

M1 bears the N-acetylmethionine mark. The interval 1 to 49 (MGCAEGKAVAAAAPTELQTKGKNGDGRRRSAKDHHPGKTLPENPAGFTS) is disordered. The span at 22–36 (KNGDGRRRSAKDHHP) shows a compositional bias: basic and acidic residues. Residues 56–156 (RALLQAYIDG…KLLKMNGPED (101 aa)) form the Glutaredoxin domain. The interval 145 to 149 (LQKLL) is required for interaction with ESR1 and ESR2. Residues 172–173 (SG), 192–193 (DF), 208–209 (TC), and 213–217 (GCIPK) each bind FAD. A disulfide bond links C209 and C214. Residue K218 is modified to N6-succinyllysine. Y281 is modified (phosphotyrosine). FAD is bound by residues 281 to 282 (YG) and T311. Residues R316, 348–354 (ASYVALE), 371–372 (RS), R376, 376–378 (RGF), 442–443 (GR), and K465 contribute to the NADP(+) site. Y350 lines the FAD pocket. FAD contacts are provided by residues D484, 491 to 493 (ELT), and H622. Residue E491 participates in NADP(+) binding. Residue H622 is the Proton acceptor of the active site. The segment at residues 647 to 648 (CU) is a cross-link (cysteinyl-selenocysteine (Cys-Sec)). U648 is a non-standard amino acid (selenocysteine).

The protein belongs to the class-I pyridine nucleotide-disulfide oxidoreductase family. Homodimer. Interacts with HERC5. As to quaternary structure, interacts with ESR1 and ESR2. The cofactor is FAD. In terms of processing, the N-terminus is blocked. ISGylated. Expressed predominantly in Leydig cells (at protein level). Also expressed in ovary, spleen, heart, liver, kidney and pancreas and in a number of cancer cell lines. In terms of tissue distribution, widely expressed with highest levels in kidney, testis, uterus, ovary, prostate, placenta and fetal liver.

It localises to the cytoplasm. Its subcellular location is the nucleus. It catalyses the reaction [thioredoxin]-dithiol + NADP(+) = [thioredoxin]-disulfide + NADPH + H(+). The catalysed reaction is H2O2 + NADPH + H(+) = NADP(+) + 2 H2O. Its function is as follows. Reduces disulfideprotein thioredoxin (Trx) to its dithiol-containing form. Homodimeric flavoprotein involved in the regulation of cellular redox reactions, growth and differentiation. Contains a selenocysteine residue at the C-terminal active site that is essential for catalysis. Also has reductase activity on hydrogen peroxide (H2O2). Induces actin and tubulin polymerization, leading to formation of cell membrane protrusions. Functionally, enhances the transcriptional activity of estrogen receptors ESR1 and ESR2. In terms of biological role, enhances the transcriptional activity of the estrogen receptor ESR2 only. Mediates cell death induced by a combination of interferon-beta and retinoic acid. In Homo sapiens (Human), this protein is Thioredoxin reductase 1, cytoplasmic.